A 294-amino-acid chain; its full sequence is Mimecan (294 aa).

A signal peptide spans 1-19; the sequence is MKTLQAAFFLVAFVPLVKP. Residue Asn-61 is glycosylated (N-linked (GlcNAc...) asparagine). LRR repeat units follow at residues 108-127, 128-151, 152-175, 176-195, 196-221, 222-242, and 243-273; these read EAVPPLPKETAYLYARFNKI, KRIAVSDFADITTLRRIDFSGNMI, EEIEDGAFSKLLLLEELSLAENRL, VKLPVLPPKLTTFNANQNRI, KSRGIKNNAFKKLTNLAYLYLGHNAL, ESVPLNLPESLRILHLQHNNI, and TTINDDTFCKSNNTRYIRTRMDEIRMEGNPI. Residues Asn-241 and Asn-254 are each glycosylated (N-linked (GlcNAc...) asparagine). An intrachain disulfide couples Cys-251 to Cys-284.

Belongs to the small leucine-rich proteoglycan (SLRP) family. SLRP class III subfamily. In terms of processing, the composition of the N-linked chains or the substitution of the N-linked sites is different between embryonic and adult tissues. Contains keratan sulfate.

It is found in the secreted. Its subcellular location is the extracellular space. The protein localises to the extracellular matrix. In terms of biological role, induces bone formation in conjunction with TGF-beta-1 or TGF-beta-2. This Gallus gallus (Chicken) protein is Mimecan (OGN).